The primary structure comprises 90 residues: Large ribosomal subunit protein bL27 (90 aa).

A disordered region spans residues 1 to 21 (MAHKKAGGSSRNGRDSHGKRL).

This sequence belongs to the bacterial ribosomal protein bL27 family.

In Nitrobacter winogradskyi (strain ATCC 25391 / DSM 10237 / CIP 104748 / NCIMB 11846 / Nb-255), this protein is Large ribosomal subunit protein bL27.